The primary structure comprises 245 residues: Orotidine 5'-phosphate decarboxylase (245 aa).

Residues Asp-22, Lys-44, 71 to 80 (DLKFHDIPNT), Thr-131, Arg-192, Gln-201, Gly-221, and Arg-222 each bind substrate. The Proton donor role is filled by Lys-73.

It belongs to the OMP decarboxylase family. Type 1 subfamily. Homodimer.

It carries out the reaction orotidine 5'-phosphate + H(+) = UMP + CO2. It participates in pyrimidine metabolism; UMP biosynthesis via de novo pathway; UMP from orotate: step 2/2. Catalyzes the decarboxylation of orotidine 5'-monophosphate (OMP) to uridine 5'-monophosphate (UMP). This Escherichia coli (strain 55989 / EAEC) protein is Orotidine 5'-phosphate decarboxylase.